The following is a 64-amino-acid chain: Large ribosomal subunit protein bL28 (64 aa).

It belongs to the bacterial ribosomal protein bL28 family.

This Bifidobacterium longum (strain NCC 2705) protein is Large ribosomal subunit protein bL28.